Here is a 169-residue protein sequence, read N- to C-terminus: Macrocypin-1a (169 aa).

Belongs to the protease inhibitor I85 family.

In terms of biological role, inhibits papain and cysteine cathepsin endopeptidases, and also inhibits cathepsins B and H, which exhibit both exopeptidase and endopeptidase activities. This is Macrocypin-1a from Macrolepiota procera (Parasol mushroom).